The sequence spans 194 residues: 23 kDa U4/U6.U5 small nuclear ribonucleoprotein component (194 aa).

A C2H2-type zinc finger spans residues 80 to 104 (FYCDICNLTFKDTLQYIDHLNHKVH).

Component of the U4/U6-U5 tri-snRNP complex composed of the U4, U6 and U5 snRNAs and at least PRP3, PRP4, PRP6, PRP8, PRP18, PRP31, PRP38, SNU13, SNU23, SNU66, SNU114, SPP381, SMB1, SMD1, SMD2, SMD3, SMX2, SMX3, LSM2, LSM3, LSM4, LSM5, LSM6, LSM7, LSM8, BRR2 and DIB1.

The protein localises to the nucleus. In terms of biological role, participates in pre-mRNA splicing. Part of the U4/U5/U6 tri-snRNP complex, one of the building blocks of the spliceosome. In Saccharomyces cerevisiae (strain ATCC 204508 / S288c) (Baker's yeast), this protein is 23 kDa U4/U6.U5 small nuclear ribonucleoprotein component (SNU23).